The chain runs to 316 residues: tRNA uridine(34) hydroxylase (316 aa).

The 95-residue stretch at 123-217 folds into the Rhodanese domain; that stretch reads LSDDTVVIDA…YGKDPETKGE (95 aa). The active-site Cysteine persulfide intermediate is the C177.

It belongs to the TrhO family.

It catalyses the reaction uridine(34) in tRNA + AH2 + O2 = 5-hydroxyuridine(34) in tRNA + A + H2O. In terms of biological role, catalyzes oxygen-dependent 5-hydroxyuridine (ho5U) modification at position 34 in tRNAs. This Staphylococcus saprophyticus subsp. saprophyticus (strain ATCC 15305 / DSM 20229 / NCIMB 8711 / NCTC 7292 / S-41) protein is tRNA uridine(34) hydroxylase.